The sequence spans 403 residues: Acetyl-CoA acetyltransferase 2 (403 aa).

Residue Cys-97 is the Acyl-thioester intermediate of the active site. Residue Lys-237 coordinates CoA. Residue Ala-254 participates in K(+) binding. A CoA-binding site is contributed by Ser-258. Val-355 provides a ligand contact to K(+). Active-site proton acceptor residues include His-359 and Cys-389.

This sequence belongs to the thiolase-like superfamily. Thiolase family. As to expression, expressed in root tips, emerging leaves, young leaves, stems, and anthers at the microspore stage.

The protein resides in the cytoplasm. Its subcellular location is the peroxisome. The enzyme catalyses 2 acetyl-CoA = acetoacetyl-CoA + CoA. The protein operates within metabolic intermediate biosynthesis; (R)-mevalonate biosynthesis; (R)-mevalonate from acetyl-CoA: step 1/3. Its function is as follows. Catalyzes the condensation of two molecules of acetyl-CoA to produce acetoacetyl-CoA. Generates the bulk of the acetoacetyl-CoA precursor required for the cytosol-localized, mevalonate-derived isoprenoid biosynthesis. The generated isoprenoids are required for normal growth and development. Essential protein during embryogenesis. In Arabidopsis thaliana (Mouse-ear cress), this protein is Acetyl-CoA acetyltransferase 2.